The following is a 556-amino-acid chain: 2-succinyl-5-enolpyruvyl-6-hydroxy-3-cyclohexene-1-carboxylate synthase (556 aa).

It belongs to the TPP enzyme family. MenD subfamily. As to quaternary structure, homodimer. Mg(2+) serves as cofactor. Mn(2+) is required as a cofactor. Requires thiamine diphosphate as cofactor.

The enzyme catalyses isochorismate + 2-oxoglutarate + H(+) = 5-enolpyruvoyl-6-hydroxy-2-succinyl-cyclohex-3-ene-1-carboxylate + CO2. It functions in the pathway quinol/quinone metabolism; 1,4-dihydroxy-2-naphthoate biosynthesis; 1,4-dihydroxy-2-naphthoate from chorismate: step 2/7. Its pathway is quinol/quinone metabolism; menaquinone biosynthesis. In terms of biological role, catalyzes the thiamine diphosphate-dependent decarboxylation of 2-oxoglutarate and the subsequent addition of the resulting succinic semialdehyde-thiamine pyrophosphate anion to isochorismate to yield 2-succinyl-5-enolpyruvyl-6-hydroxy-3-cyclohexene-1-carboxylate (SEPHCHC). The chain is 2-succinyl-5-enolpyruvyl-6-hydroxy-3-cyclohexene-1-carboxylate synthase from Shigella boydii serotype 4 (strain Sb227).